Consider the following 673-residue polypeptide: Xyloglucan glycosyltransferase 4 (673 aa).

The next 2 helical transmembrane spans lie at 90 to 110 (FIKACLVISIIALSIEIVAHF) and 144 to 164 (IAPLVISLSRFCTVLFLIQSL). Residue Asp-238 is part of the active site. Residues Asp-297 and Asp-299 each coordinate substrate. Residue Asp-391 is part of the active site. Transmembrane regions (helical) follow at residues 469-489 (LILPFYSFTLFCIILPLTMFI) and 494-514 (LPLWIICYVPIFISLLNILPS). Phosphoserine is present on Ser-581. The next 2 helical transmembrane spans lie at 623-643 (VFKKELGLAFLLLTAAARSFL) and 648-668 (LHFYFLLFQGLSFLVVGLDLI).

It belongs to the glycosyltransferase 2 family. Plant cellulose synthase-like C subfamily. In terms of assembly, homodimer. Interacts with XXT5. Interacts with FUT1, MUR3 and XLT2. In terms of tissue distribution, expressed in seedlings, roots, leaves, stems, flowers and seeds.

It is found in the golgi apparatus membrane. In terms of biological role, beta-1,4-glucan synthase rather involved in the synthesis of the xyloglucan backbone than cellulose. Seems to work simultaneously with xyloglucan 6-xylosyltransferase. Xyloglucan is a noncellulosic polysaccharides of plant cell wall and consists of a glucan backbone substituted by xylose, galactose and fucose. Associates with other xyloglucan-synthesizing enzymes to form multiprotein complexes for xyloglucan synthesis in the Golgi. The protein is Xyloglucan glycosyltransferase 4 of Arabidopsis thaliana (Mouse-ear cress).